Reading from the N-terminus, the 588-residue chain is Aspartate--tRNA ligase (588 aa).

Glu172 lines the L-aspartate pocket. Positions Gln196 to Lys199 are aspartate. Arg218 contacts L-aspartate. Residues Arg218 to Glu220 and Gln227 each bind ATP. Position 449 (His449) interacts with L-aspartate. Glu483 contacts ATP. L-aspartate is bound at residue Arg490. Gly535–Arg538 serves as a coordination point for ATP.

It belongs to the class-II aminoacyl-tRNA synthetase family. Type 1 subfamily. Homodimer.

Its subcellular location is the cytoplasm. It catalyses the reaction tRNA(Asp) + L-aspartate + ATP = L-aspartyl-tRNA(Asp) + AMP + diphosphate. Functionally, catalyzes the attachment of L-aspartate to tRNA(Asp) in a two-step reaction: L-aspartate is first activated by ATP to form Asp-AMP and then transferred to the acceptor end of tRNA(Asp). This is Aspartate--tRNA ligase from Haemophilus influenzae (strain PittGG).